Here is a 297-residue protein sequence, read N- to C-terminus: Cytidine deaminase (297 aa).

2 CMP/dCMP-type deaminase domains span residues 54–174 and 192–297; these read SSVE…FGPK and LRGD…YIEV. 95–97 serves as a coordination point for substrate; it reads NQE. Zn(2+) is bound at residue His-108. The active-site Proton donor is the Glu-110. Residues Cys-135 and Cys-138 each contribute to the Zn(2+) site.

Belongs to the cytidine and deoxycytidylate deaminase family. As to quaternary structure, homodimer. The cofactor is Zn(2+).

The enzyme catalyses cytidine + H2O + H(+) = uridine + NH4(+). It catalyses the reaction 2'-deoxycytidine + H2O + H(+) = 2'-deoxyuridine + NH4(+). In terms of biological role, this enzyme scavenges exogenous and endogenous cytidine and 2'-deoxycytidine for UMP synthesis. This is Cytidine deaminase from Actinobacillus pleuropneumoniae serotype 5b (strain L20).